The following is a 166-amino-acid chain: Bud site selection protein 20 (166 aa).

The short motif at 7-16 (KRYKTKRRTR) is the Nuclear localization signal element. A nuclear export signal-like (NES-like) region spans residues 17-31 (DLDLIYNDLSTKESV). The C2H2-type zinc finger occupies 49-73 (HYCIHCAKYMETAIALKTHLKGKVH).

It belongs to the ZNF593/BUD20 C2H2-type zinc-finger protein family. In terms of assembly, associates with pre-60S ribosomal particles; released from the pre-60S particle very early in the cytoplasm.

The protein localises to the nucleus. The protein resides in the cytoplasm. Involved in pre-60S ribosomal particles maturation by promoting the nuclear export of the 60S ribosome. Involved in positioning the proximal bud pole signal. The chain is Bud site selection protein 20 from Saccharomyces cerevisiae (strain ATCC 204508 / S288c) (Baker's yeast).